Here is a 353-residue protein sequence, read N- to C-terminus: Dimethylsulfoniopropionate lyase 2 (353 aa).

Residues C125 and C274 each act as proton donor/acceptor in the active site. The tract at residues 326–353 (DPNETDVSKGRPTKAEHRFGPEFEEMLQ) is disordered. Over residues 331-346 (DVSKGRPTKAEHRFGP) the composition is skewed to basic and acidic residues.

It belongs to the aspartate/glutamate racemases family. ALMA1 subfamily. As to quaternary structure, homotetramer.

The enzyme catalyses S,S-dimethyl-beta-propiothetin = acrylate + dimethyl sulfide + H(+). Mediates cleavage of dimethylsulfoniopropionate (DMSP) into dimethyl sulfide (DMS) and acrylate. DMS is the principal form by which sulfur is transported from oceans to the atmosphere and is a key component of the ocean sulfur cycle. This Emiliania huxleyi (strain CCMP1516) protein is Dimethylsulfoniopropionate lyase 2.